The sequence spans 303 residues: Protein REVEILLE 5 (303 aa).

The HTH myb-type domain occupies Thr-54–Gln-108. The H-T-H motif DNA-binding region spans Trp-81 to Phe-104. Positions Lys-109 to Pro-130 are disordered.

The protein resides in the nucleus. In terms of biological role, probable transcription factor. The polypeptide is Protein REVEILLE 5 (RVE5) (Arabidopsis thaliana (Mouse-ear cress)).